Here is a 360-residue protein sequence, read N- to C-terminus: uncharacterized protein (360 aa).

The segment at 1-33 (MSGRRKGCSAATASSSSSSPPSRLPPLPGHARR) is disordered.

It belongs to the herpesviridae US22 family.

This is an uncharacterized protein from Human cytomegalovirus (strain AD169) (HHV-5).